Here is a 552-residue protein sequence, read N- to C-terminus: FACT complex subunit POB3 (552 aa).

Residues 190–205 (KKEESSNEVVPKKEDG) are compositionally biased toward basic and acidic residues. Disordered stretches follow at residues 190–209 (KKEE…AEGE) and 484–552 (QTAL…PKVE). Residues 490–529 (DSDEEDINMGSAGEDDESVDEDFQVSSDNDADEVAEEFDS) are compositionally biased toward acidic residues. The segment covering 541-552 (DEERPSKKPKVE) has biased composition (basic and acidic residues).

It belongs to the SSRP1 family. As to quaternary structure, forms a stable heterodimer with SPT16. The SPT16-POB3 dimer weakly associates with multiple molecules of NHP6 (NHP6A or NHP6B) to form the FACT (yFACT or SNP) complex. The FACT complex interacts with the CK2 (casein kinase II) complex subunits CKA1, CKA2, CKB1 and CKB2 and the components of the transcription machinery CHD1, CTR9, PAF1 and CDC73. The FACT complex interacts with the PAF1 complex. SPT16 interacts with SAS3 and POL1. Interacts directly with RFA1.

The protein localises to the nucleus. The protein resides in the chromosome. Component of the FACT complex, a general chromatin factor that acts to reorganize nucleosomes. The FACT complex is involved in multiple processes that require DNA as a template such as mRNA elongation, DNA replication and DNA repair. During transcription elongation the FACT complex acts as a histone chaperone that both destabilizes and restores nucleosomal structure. It facilitates the passage of RNA polymerase II and transcription by promoting the dissociation of one histone H2A-H2B dimer from the nucleosome, then subsequently promotes the reestablishment of the nucleosome following the passage of RNA polymerase II. Transcription elongation is promoted by the repression of transcription initiation from cryptic sites. Also acts in establishing transcription initiation complexes and promotes SPT15/TBP-binding to a TATA box. Together with replication factor-A protein (RPA), FACT may play a role in nucleosome deposition during DNA replication. The sequence is that of FACT complex subunit POB3 (POB3) from Saccharomyces cerevisiae (strain ATCC 204508 / S288c) (Baker's yeast).